Consider the following 574-residue polypeptide: Septation ring formation regulator EzrA (574 aa).

Over 1–7 the chain is Extracellular; the sequence is MPTGTII. Residues 8–26 traverse the membrane as a helical segment; sequence LIVSIVIILIIAYVACLIV. The Cytoplasmic segment spans residues 27–574; sequence RKRNDNLLVA…YEKTREAIRY (548 aa). A coiled-coil region spans residues 105–189; that stretch reads SAKNAIDSID…IEVEFSEFVM (85 aa).

The protein belongs to the EzrA family.

It is found in the cell membrane. Negative regulator of FtsZ ring formation; modulates the frequency and position of FtsZ ring formation. Inhibits FtsZ ring formation at polar sites. Interacts either with FtsZ or with one of its binding partners to promote depolymerization. The polypeptide is Septation ring formation regulator EzrA (Streptococcus suis (strain 98HAH33)).